We begin with the raw amino-acid sequence, 163 residues long: Ribosome maturation factor RimP (163 aa).

The protein belongs to the RimP family.

It is found in the cytoplasm. In terms of biological role, required for maturation of 30S ribosomal subunits. This chain is Ribosome maturation factor RimP, found in Polynucleobacter necessarius subsp. necessarius (strain STIR1).